Reading from the N-terminus, the 87-residue chain is RNA-binding protein Hfq (87 aa).

The Sm domain occupies 9 to 68; sequence DPFLNALRRERIPVSIYLVNGIKLQGQIESFDQFVILLKNTVSQMVYKHAISTVVPARAV.

Belongs to the Hfq family. Homohexamer.

In terms of biological role, RNA chaperone that binds small regulatory RNA (sRNAs) and mRNAs to facilitate mRNA translational regulation in response to envelope stress, environmental stress and changes in metabolite concentrations. Also binds with high specificity to tRNAs. This chain is RNA-binding protein Hfq, found in Aeromonas salmonicida (strain A449).